The primary structure comprises 226 residues: Leucyl/phenylalanyl-tRNA--protein transferase (226 aa).

Belongs to the L/F-transferase family.

The protein localises to the cytoplasm. The enzyme catalyses N-terminal L-lysyl-[protein] + L-leucyl-tRNA(Leu) = N-terminal L-leucyl-L-lysyl-[protein] + tRNA(Leu) + H(+). It catalyses the reaction N-terminal L-arginyl-[protein] + L-leucyl-tRNA(Leu) = N-terminal L-leucyl-L-arginyl-[protein] + tRNA(Leu) + H(+). The catalysed reaction is L-phenylalanyl-tRNA(Phe) + an N-terminal L-alpha-aminoacyl-[protein] = an N-terminal L-phenylalanyl-L-alpha-aminoacyl-[protein] + tRNA(Phe). Its function is as follows. Functions in the N-end rule pathway of protein degradation where it conjugates Leu, Phe and, less efficiently, Met from aminoacyl-tRNAs to the N-termini of proteins containing an N-terminal arginine or lysine. The polypeptide is Leucyl/phenylalanyl-tRNA--protein transferase (Azotobacter vinelandii (strain DJ / ATCC BAA-1303)).